A 107-amino-acid chain; its full sequence is UPF0060 membrane protein M446_5886 (107 aa).

4 consecutive transmembrane segments (helical) span residues 4-24, 31-51, 59-79, and 85-105; these read LLAY…IWAW, PLWL…LTRV, AYAA…WAAE, and RWDL…LLGP.

The protein belongs to the UPF0060 family.

It localises to the cell inner membrane. The polypeptide is UPF0060 membrane protein M446_5886 (Methylobacterium sp. (strain 4-46)).